Reading from the N-terminus, the 317-residue chain is 17-beta-hydroxysteroid dehydrogenase type 6 (317 aa).

An N-terminal signal peptide occupies residues 1–17 (MWFYLVTLVGLYHLLRW). Position 33 to 57 (33 to 57 (FITGCDSGFGNLLARQLDRRGMRVL)) interacts with NAD(+). N-linked (GlcNAc...) asparagine glycosylation is found at Asn-71 and Asn-161. Position 164 (Ser-164) interacts with substrate. Catalysis depends on Tyr-176, which acts as the Proton acceptor.

The protein belongs to the short-chain dehydrogenases/reductases (SDR) family. In terms of tissue distribution, detected in liver.

Its subcellular location is the microsome membrane. It is found in the early endosome membrane. The catalysed reaction is all-trans-retinol--[retinol-binding protein] + NAD(+) = all-trans-retinal--[retinol-binding protein] + NADH + H(+). It carries out the reaction all-trans-retinol + NAD(+) = all-trans-retinal + NADH + H(+). The enzyme catalyses androsterone + NAD(+) = 5alpha-androstan-3,17-dione + NADH + H(+). It catalyses the reaction testosterone + NAD(+) = androst-4-ene-3,17-dione + NADH + H(+). The catalysed reaction is 5alpha-androstane-3alpha,17beta-diol + NAD(+) = 17beta-hydroxy-5alpha-androstan-3-one + NADH + H(+). It carries out the reaction 17beta-estradiol + NAD(+) = estrone + NADH + H(+). The enzyme catalyses 17beta-estradiol + NADP(+) = estrone + NADPH + H(+). It catalyses the reaction 3alpha-hydroxy-5alpha-pregnan-20-one + NAD(+) = 5alpha-pregnane-3,20-dione + NADH + H(+). The catalysed reaction is 5alpha-androstane-3beta,17beta-diol + NAD(+) = 17beta-hydroxy-5alpha-androstan-3-one + NADH + H(+). It carries out the reaction 3beta-hydroxy-5alpha-androstan-17-one + NAD(+) = 5alpha-androstan-3,17-dione + NADH + H(+). Inhibited by carbenoxolone and phenyl arsenoxide. Its function is as follows. NAD-dependent oxidoreductase with broad substrate specificity that shows both oxidative and reductive activity (in vitro). Has 17-beta-hydroxysteroid dehydrogenase activity towards various steroids (in vitro). Converts 5-alpha-androstan-3-alpha,17-beta-diol to androsterone and estradiol to estrone (in vitro). Has 3-alpha-hydroxysteroid dehydrogenase activity towards androsterone (in vitro). Has retinol dehydrogenase activity towards all-trans-retinol (in vitro). In Mus musculus (Mouse), this protein is 17-beta-hydroxysteroid dehydrogenase type 6 (Hsd17b6).